The chain runs to 361 residues: Phospho-N-acetylmuramoyl-pentapeptide-transferase (361 aa).

10 consecutive transmembrane segments (helical) span residues 27–47 (ILASLTALIVGLLCGPLMIRW), 70–90 (GTPTMGGVLILLAITVSCLLW), 97–117 (SLWLVLLVTLANGLVGWVDDY), 134–154 (YFWQSVIALVAVSYLYWNASL), 167–187 (TVTWDLGVFFPVLAYFVIVGS), 199–219 (GLAIMPIVMVAGALGVFAYAS), 236–256 (TGELTIFCSSIVGAGLGFLWY), 263–283 (VFMGDVGSLALGAALGIVAIV), 288–308 (LVLLIMGGLFVIETLSVILQV), and 338–358 (KVIVRFWIITVVFVLCGLATL).

This sequence belongs to the glycosyltransferase 4 family. MraY subfamily. The cofactor is Mg(2+).

It localises to the cell inner membrane. It carries out the reaction UDP-N-acetyl-alpha-D-muramoyl-L-alanyl-gamma-D-glutamyl-meso-2,6-diaminopimeloyl-D-alanyl-D-alanine + di-trans,octa-cis-undecaprenyl phosphate = di-trans,octa-cis-undecaprenyl diphospho-N-acetyl-alpha-D-muramoyl-L-alanyl-D-glutamyl-meso-2,6-diaminopimeloyl-D-alanyl-D-alanine + UMP. It functions in the pathway cell wall biogenesis; peptidoglycan biosynthesis. Its function is as follows. Catalyzes the initial step of the lipid cycle reactions in the biosynthesis of the cell wall peptidoglycan: transfers peptidoglycan precursor phospho-MurNAc-pentapeptide from UDP-MurNAc-pentapeptide onto the lipid carrier undecaprenyl phosphate, yielding undecaprenyl-pyrophosphoryl-MurNAc-pentapeptide, known as lipid I. This is Phospho-N-acetylmuramoyl-pentapeptide-transferase from Legionella pneumophila (strain Paris).